The primary structure comprises 334 residues: Glyceraldehyde-3-phosphate dehydrogenase (334 aa).

NAD(+) is bound by residues 10–11, Asp-33, Lys-77, and Thr-119; that span reads RI. Residues 149–151, Thr-180, 209–210, and Arg-232 each bind D-glyceraldehyde 3-phosphate; these read SCT and TG. Cys-150 serves as the catalytic Nucleophile. Position 314 (Asn-314) interacts with NAD(+).

This sequence belongs to the glyceraldehyde-3-phosphate dehydrogenase family. In terms of assembly, homotetramer.

It localises to the cytoplasm. It carries out the reaction D-glyceraldehyde 3-phosphate + phosphate + NAD(+) = (2R)-3-phospho-glyceroyl phosphate + NADH + H(+). Its pathway is carbohydrate degradation; glycolysis; pyruvate from D-glyceraldehyde 3-phosphate: step 1/5. In terms of biological role, catalyzes the oxidative phosphorylation of glyceraldehyde 3-phosphate (G3P) to 1,3-bisphosphoglycerate (BPG) using the cofactor NAD. The first reaction step involves the formation of a hemiacetal intermediate between G3P and a cysteine residue, and this hemiacetal intermediate is then oxidized to a thioester, with concomitant reduction of NAD to NADH. The reduced NADH is then exchanged with the second NAD, and the thioester is attacked by a nucleophilic inorganic phosphate to produce BPG. The protein is Glyceraldehyde-3-phosphate dehydrogenase (gap) of Chlamydia trachomatis serovar L2 (strain ATCC VR-902B / DSM 19102 / 434/Bu).